Here is a 311-residue protein sequence, read N- to C-terminus: N-acetylmuramic acid 6-phosphate etherase (311 aa).

Residues 66 to 229 (VAVRMARGGR…STITMIRLGK (164 aa)) enclose the SIS domain. Glu94 (proton donor) is an active-site residue. Glu125 is a catalytic residue.

Belongs to the GCKR-like family. MurNAc-6-P etherase subfamily. Homodimer.

It catalyses the reaction N-acetyl-D-muramate 6-phosphate + H2O = N-acetyl-D-glucosamine 6-phosphate + (R)-lactate. The protein operates within amino-sugar metabolism; N-acetylmuramate degradation. Functionally, specifically catalyzes the cleavage of the D-lactyl ether substituent of MurNAc 6-phosphate, producing GlcNAc 6-phosphate and D-lactate. In Streptomyces coelicolor (strain ATCC BAA-471 / A3(2) / M145), this protein is N-acetylmuramic acid 6-phosphate etherase.